Consider the following 572-residue polypeptide: E3 SUMO-protein ligase PIAS2 (572 aa).

Positions 11–45 (VSSFRVSELQVLLGFAGRNKSGRKHDLLMRALHLL) constitute an SAP domain. Positions 19 to 23 (LQVLL) match the LXXLL motif motif. Glycyl lysine isopeptide (Lys-Gly) (interchain with G-Cter in SUMO2) cross-links involve residues Lys46 and Lys249. Residues 134–299 (QPSPPIPPVH…SMSVYLVRQL (166 aa)) form the PINIT domain. Residues 331–412 (PDSEIATTSL…FMEILNDCSD (82 aa)) form an SP-RING-type zinc finger. Zn(2+) is bound by residues Cys362, His364, Cys385, and Cys388. Residues Lys430, Lys435, Lys443, and Lys452 each participate in a glycyl lysine isopeptide (Lys-Gly) (interchain with G-Cter in SUMO2) cross-link. Residues 467 to 473 (IDVIDLT) form an SUMO1-binding region. Phosphoserine is present on residues Ser476, Ser477, and Ser478. The Nuclear localization signal motif lies at 484-492 (PPAKRKCIF). Lys489 participates in a covalent cross-link: Glycyl lysine isopeptide (Lys-Gly) (interchain with G-Cter in SUMO2). Ser499 is subject to Phosphoserine. Lys502 participates in a covalent cross-link: Glycyl lysine isopeptide (Lys-Gly) (interchain with G-Cter in SUMO2). Residues 523–572 (AAIPPSLTDYSVPFHHTPVSSMSSDLPGEQRRNDINNEVQLGTSSDTVQQ) form a disordered region. Polar residues predominate over residues 558–572 (NNEVQLGTSSDTVQQ).

This sequence belongs to the PIAS family. In terms of assembly, binds SUMO1 and UBE2I. Interacts with AXIN1, JUN, MDM2, PARK7, TP53 and TP73 isoform alpha, but not TP73 isoform beta. Interacts with STAT4 following IL12 and IFN-alpha stimulation of T-cells. Interacts also with GTF2I, GTF2IRD1, IKFZ1, DAB2 and MSX2, as well as with several steroid receptors, including ESR1, ESR2, NR3C1, PGR, AR, and with NCOA2. Sumoylation of a target protein seems to enhance the interaction. Binds to sumoylated ELK1. Binds DNA, such as CDKN1A promoter, in a sequence-specific manner. Interacts with PLAG1. Interacts with KLF8; the interaction results in SUMO ligation and repression of KLF8 transcriptional activity and of its cell cycle progression into G(1) phase. Interacts with IFIH1/MDA5. Interacts with PML. Interacts with PRDM1. In terms of processing, sumoylated. As to expression, mainly expressed in testis.

It localises to the nucleus speckle. The protein localises to the nucleus. The protein resides in the PML body. Its pathway is protein modification; protein sumoylation. Functionally, functions as an E3-type small ubiquitin-like modifier (SUMO) ligase, stabilizing the interaction between UBE2I and the substrate, and as a SUMO-tethering factor. Plays a crucial role as a transcriptional coregulation in various cellular pathways, including the STAT pathway, the p53 pathway and the steroid hormone signaling pathway. The effects of this transcriptional coregulation, transactivation or silencing may vary depending upon the biological context and PIAS2 isoform studied. However, it seems to be mostly involved in gene silencing. Binds to sumoylated ELK1 and enhances its transcriptional activity by preventing recruitment of HDAC2 by ELK1, thus reversing SUMO-mediated repression of ELK1 transactivation activity. Sumoylates PML at'Lys-65' and 'Lys-160'. The chain is E3 SUMO-protein ligase PIAS2 (Pias2) from Rattus norvegicus (Rat).